The sequence spans 2548 residues: Unconventional myosin-IXa (2548 aa).

Residues 14–112 (NEHTLRIYPG…YRFLLREKNL (99 aa)) form the Ras-associating domain. One can recognise a Myosin motor domain in the interval 146-1016 (KDFDDLCSLP…ERQHLQDLLH (871 aa)). Residues 175–195 (IYTYVGSILIVINPFKFLPIY) form a helical membrane-spanning segment. 239-246 (GESGSGKT) provides a ligand contact to ATP. Position 755 is a phosphoserine (serine 755). An actin-binding region spans residues 898-920 (LSKLMETLGQAEPYFVKCIRSNA). IQ domains follow at residues 1021–1041 (RRII…HFLH), 1042–1071 (LRQA…QKDA), 1074–1103 (MASA…AAIV), 1115–1144 (RHMA…KIIL), and 1138–1167 (QRKK…QRLR). Positions 1021–1162 (RRIILLQRWF…RARQRFKALK (142 aa)) are neck or regulatory domain. A tail region spans residues 1163 to 2511 (EQRLRETKPE…LKNVKNSPQK (1349 aa)). A compositionally biased stretch (basic and acidic residues) spans 1223-1236 (SVDCLKESPNKQQE). The interval 1223–1250 (SVDCLKESPNKQQERAQSQSGVDLQEDV) is disordered. Serine 1242 and serine 1258 each carry phosphoserine. A coiled-coil region spans residues 1264–1291 (QKKVGRAKRESRRMRELEQAIFSLELLK). 2 positions are modified to phosphoserine: serine 1299 and serine 1317. Positions 1299–1386 (SPSEDRRWST…SNETSSAEHL (88 aa)) are disordered. Composition is skewed to low complexity over residues 1324 to 1337 (SESS…LSYE) and 1356 to 1366 (FPSPKISSSPK). The residue at position 1364 (serine 1364) is a Phosphoserine. Over residues 1372–1381 (NALSASNETS) the composition is skewed to polar residues. Residues 1486–1532 (VLKKLEKLNTEKEERQKQLQQQNEKEMMEQIRQQTDILEKERKAFKT) are a coiled coil. A disordered region spans residues 1804–1836 (YHPTPPLSPELPGSCRKEFKENKEPSPKAKRKR). The span at 1818-1830 (CRKEFKENKEPSP) shows a compositional bias: basic and acidic residues. A Phosphoserine modification is found at serine 1948. 2 consecutive Phorbol-ester/DAG-type zinc fingers follow at residues 1999–2048 (GHIF…TAKC) and 2068–2119 (LTSE…DAES). The 189-residue stretch at 2063–2251 (VELSRLTSED…LIVVEQMNKY (189 aa)) folds into the Rho-GAP domain. Serine 2294 is subject to Phosphoserine. A coiled-coil region spans residues 2315-2358 (AAMETDITEQQQAAMQQEERVLTEQIENLQKEKEELTFEMLVLE). Disordered regions lie at residues 2359-2383 (PRAS…ENLN) and 2401-2424 (SSLK…KQQD). Serine 2464 is subject to Phosphoserine. The tract at residues 2490 to 2531 (RGTFNPEKGKQKLKNVKNSPQKTKETPEGTVMSGRRKTVDPD) is disordered.

This sequence belongs to the TRAFAC class myosin-kinesin ATPase superfamily. Myosin family. Post-translationally, phosphorylated by ALPK1 following monosodium urate monohydrate (MSU)-induced inflammation. Found to be expressed in testis and placenta and at lower levels in all the examined tissues with the exception of liver. Isoform 5: Found in leukocytes but not in brain, retina or testis.

Its subcellular location is the membrane. It localises to the cytoplasm. It is found in the synapse. The protein localises to the cell projection. The protein resides in the growth cone. Its function is as follows. Myosins are actin-based motor molecules with ATPase activity. Unconventional myosins serve in intracellular movements. Regulates Rho by stimulating it's GTPase activity in neurons. Required for the regulation of neurite branching and motor neuron axon guidance. The protein is Unconventional myosin-IXa (MYO9A) of Homo sapiens (Human).